An 85-amino-acid polypeptide reads, in one-letter code: MERSNRKVRTGRVVSDKMDKTRVVLVEGRTKHPLYEKTVKQAKKFKAHDEANETREGDVVKIMETRPTSKDKRWRIVDIIERTKL.

The protein belongs to the universal ribosomal protein uS17 family. Part of the 30S ribosomal subunit.

Its function is as follows. One of the primary rRNA binding proteins, it binds specifically to the 5'-end of 16S ribosomal RNA. The polypeptide is Small ribosomal subunit protein uS17 (Natranaerobius thermophilus (strain ATCC BAA-1301 / DSM 18059 / JW/NM-WN-LF)).